Consider the following 183-residue polypeptide: MLKDIVLVLALQLVYVPILTLRTIFMVKNMSLLAAFMGFLEALIYVFGLSIVFSGKQSYIVMIVYAAGFGARGFLLEDISSKSWAIGYTTVTVNLQQKNQELIHLLRESGYGVTVYTGEGRDSQRYRLDILTKRNREEELLELIERYEPKAFIISYEPRRFKGGFLVASMKKRVKRKKECHES.

Helical transmembrane passes span 5-25 (IVLVLALQLVYVPILTLRTIF), 33-53 (LAAFMGFLEALIYVFGLSIVF), and 59-79 (YIVMIVYAAGFGARGFLLEDI).

The protein belongs to the UPF0316 family.

Its subcellular location is the cell membrane. In Geobacillus thermodenitrificans (strain NG80-2), this protein is UPF0316 protein GTNG_0803.